Reading from the N-terminus, the 190-residue chain is Probable chorismate pyruvate-lyase (190 aa).

The substrate site is built by Arg-74, Leu-112, and Glu-173.

The protein belongs to the UbiC family.

The protein resides in the cytoplasm. It catalyses the reaction chorismate = 4-hydroxybenzoate + pyruvate. It participates in cofactor biosynthesis; ubiquinone biosynthesis. In terms of biological role, removes the pyruvyl group from chorismate, with concomitant aromatization of the ring, to provide 4-hydroxybenzoate (4HB) for the ubiquinone pathway. The sequence is that of Probable chorismate pyruvate-lyase from Bordetella bronchiseptica (strain ATCC BAA-588 / NCTC 13252 / RB50) (Alcaligenes bronchisepticus).